We begin with the raw amino-acid sequence, 396 residues long: Activity-regulated cytoskeleton-associated protein (396 aa).

Positions 54–78 form a coiled coil; it reads SKQVERELKGLHRSVGKLESNLDGY. The interaction with SH3GL1 or SH3GL3 stretch occupies residues 89–100; the sequence is KSIKACLCRCQE. The segment at 195–214 is interaction with DNM2; sequence QPWVPGEDGQPSPGVDTQIF. At serine 260 the chain carries Phosphoserine. Glycyl lysine isopeptide (Lys-Gly) (interchain with G-Cter in ubiquitin) cross-links involve residues lysine 268 and lysine 269. At threonine 278 the chain carries Phosphothreonine. A disordered region spans residues 356–396; sequence QDDLEQAAEPAGPHLPVEDEAETLTPAPNSESVASDRTQPE. Residues 381–396 show a composition bias toward polar residues; the sequence is PAPNSESVASDRTQPE.

The protein belongs to the ARC/ARG3.1 family. In terms of assembly, homooligomer; homooligomerizes into virion-like capsids. Interacts with SH3GL1/endophilin-2, SH3GL3/endophilin-3 and DNM2/DYN2. Interacts with CAMK2B (in the kinase inactive state); leading to target ARC to inactive synapses. Interacts with PSEN1. In terms of processing, palmitoylation anchors the protein into the membrane by allowing direct insertion into the hydrophobic core of the lipid bilayer. Ubiquitinated by UBE3A, leading to its degradation by the proteasome, thereby promoting AMPA receptors (AMPARs) expression at synapses. Ubiquitinated by RNF216 at Lys-268 and Lys-269 limiting ARC protein levels induced by synaptic activity and thus regulating ARC-dependent forms of synaptic plasticity. Post-translationally, phosphorylation at Ser-260 by CaMK2 prevents homooligomerization into virion-like capsids by disrupting an interaction surface essential for high-order oligomerization. Phosphorylation by CaMK2 inhibits synaptic activity.

It is found in the extracellular vesicle membrane. The protein resides in the postsynaptic cell membrane. The protein localises to the synapse. Its subcellular location is the postsynaptic density. It localises to the early endosome membrane. It is found in the cell projection. The protein resides in the dendrite. The protein localises to the cytoplasm. Its subcellular location is the cytoskeleton. It localises to the cell cortex. It is found in the dendritic spine. The protein resides in the cytoplasmic vesicle. The protein localises to the secretory vesicle. Its subcellular location is the acrosome. It localises to the clathrin-coated vesicle membrane. Its function is as follows. Master regulator of synaptic plasticity that self-assembles into virion-like capsids that encapsulate RNAs and mediate intercellular RNA transfer in the nervous system. ARC protein is released from neurons in extracellular vesicles that mediate the transfer of ARC mRNA into new target cells, where ARC mRNA can undergo activity-dependent translation. ARC capsids are endocytosed and are able to transfer ARC mRNA into the cytoplasm of neurons. Acts as a key regulator of synaptic plasticity: required for protein synthesis-dependent forms of long-term potentiation (LTP) and depression (LTD) and for the formation of long-term memory. Regulates synaptic plasticity by promoting endocytosis of AMPA receptors (AMPARs) in response to synaptic activity: this endocytic pathway maintains levels of surface AMPARs in response to chronic changes in neuronal activity through synaptic scaling, thereby contributing to neuronal homeostasis. Acts as a postsynaptic mediator of activity-dependent synapse elimination in the developing cerebellum by mediating elimination of surplus climbing fiber synapses. Accumulates at weaker synapses, probably to prevent their undesired enhancement. This suggests that ARC-containing virion-like capsids may be required to eliminate synaptic material. Required to transduce experience into long-lasting changes in visual cortex plasticity and for long-term memory. Involved in postsynaptic trafficking and processing of amyloid-beta A4 (APP) via interaction with PSEN1. In addition to its role in synapses, also involved in the regulation of the immune system: specifically expressed in skin-migratory dendritic cells and regulates fast dendritic cell migration, thereby regulating T-cell activation. The sequence is that of Activity-regulated cytoskeleton-associated protein from Homo sapiens (Human).